A 1346-amino-acid chain; its full sequence is DNA-directed RNA polymerase subunit beta (1346 aa).

Belongs to the RNA polymerase beta chain family. The RNAP catalytic core consists of 2 alpha, 1 beta, 1 beta' and 1 omega subunit. When a sigma factor is associated with the core the holoenzyme is formed, which can initiate transcription.

The enzyme catalyses RNA(n) + a ribonucleoside 5'-triphosphate = RNA(n+1) + diphosphate. Functionally, DNA-dependent RNA polymerase catalyzes the transcription of DNA into RNA using the four ribonucleoside triphosphates as substrates. The sequence is that of DNA-directed RNA polymerase subunit beta from Psychromonas ingrahamii (strain DSM 17664 / CCUG 51855 / 37).